Here is a 211-residue protein sequence, read N- to C-terminus: Thymidylate kinase (211 aa).

An ATP-binding site is contributed by glycine 10–threonine 17.

This sequence belongs to the thymidylate kinase family.

It catalyses the reaction dTMP + ATP = dTDP + ADP. Its function is as follows. Phosphorylation of dTMP to form dTDP in both de novo and salvage pathways of dTTP synthesis. The sequence is that of Thymidylate kinase from Trichormus variabilis (strain ATCC 29413 / PCC 7937) (Anabaena variabilis).